The chain runs to 331 residues: Tetraacyldisaccharide 4'-kinase (331 aa).

60 to 67 is a binding site for ATP; the sequence is TIGGTGKT.

The protein belongs to the LpxK family.

The catalysed reaction is a lipid A disaccharide + ATP = a lipid IVA + ADP + H(+). It functions in the pathway glycolipid biosynthesis; lipid IV(A) biosynthesis; lipid IV(A) from (3R)-3-hydroxytetradecanoyl-[acyl-carrier-protein] and UDP-N-acetyl-alpha-D-glucosamine: step 6/6. Transfers the gamma-phosphate of ATP to the 4'-position of a tetraacyldisaccharide 1-phosphate intermediate (termed DS-1-P) to form tetraacyldisaccharide 1,4'-bis-phosphate (lipid IVA). The sequence is that of Tetraacyldisaccharide 4'-kinase from Pseudomonas syringae pv. tomato (strain ATCC BAA-871 / DC3000).